Consider the following 260-residue polypeptide: Cytochrome c oxidase subunit 3 (260 aa).

Helical transmembrane passes span 30-50 (LILWFHINSTILFILGTVLLV), 81-101 (GMILFITSEVCLFFAFFWAFF), 126-146 (FLVPLLNTAVLLSSGVTVTWA), 158-178 (AIQSLTLTVFLGVYFTILQAW), 196-216 (FFVATGFHGLHVLIGTAFLAV), and 239-259 (WYWHFVDVVWLFLYICIYWWG).

The protein belongs to the cytochrome c oxidase subunit 3 family. As to quaternary structure, component of the cytochrome c oxidase (complex IV, CIV), a multisubunit enzyme composed of a catalytic core of 3 subunits and several supernumerary subunits. The complex exists as a monomer or a dimer and forms supercomplexes (SCs) in the inner mitochondrial membrane with ubiquinol-cytochrome c oxidoreductase (cytochrome b-c1 complex, complex III, CIII).

Its subcellular location is the mitochondrion inner membrane. It catalyses the reaction 4 Fe(II)-[cytochrome c] + O2 + 8 H(+)(in) = 4 Fe(III)-[cytochrome c] + 2 H2O + 4 H(+)(out). In terms of biological role, component of the cytochrome c oxidase, the last enzyme in the mitochondrial electron transport chain which drives oxidative phosphorylation. The respiratory chain contains 3 multisubunit complexes succinate dehydrogenase (complex II, CII), ubiquinol-cytochrome c oxidoreductase (cytochrome b-c1 complex, complex III, CIII) and cytochrome c oxidase (complex IV, CIV), that cooperate to transfer electrons derived from NADH and succinate to molecular oxygen, creating an electrochemical gradient over the inner membrane that drives transmembrane transport and the ATP synthase. Cytochrome c oxidase is the component of the respiratory chain that catalyzes the reduction of oxygen to water. Electrons originating from reduced cytochrome c in the intermembrane space (IMS) are transferred via the dinuclear copper A center (CU(A)) of subunit 2 and heme A of subunit 1 to the active site in subunit 1, a binuclear center (BNC) formed by heme A3 and copper B (CU(B)). The BNC reduces molecular oxygen to 2 water molecules using 4 electrons from cytochrome c in the IMS and 4 protons from the mitochondrial matrix. In Pisaster ochraceus (Ochre sea star), this protein is Cytochrome c oxidase subunit 3 (COIII).